Here is a 23-residue protein sequence, read N- to C-terminus: Pseudin-4 (23 aa).

As to expression, expressed by the skin glands.

It localises to the secreted. In terms of biological role, possesses antifungal activity against C.albicans and is also active against E.coli and S.aureus. This chain is Pseudin-4, found in Pseudis paradoxa (Paradoxical frog).